Here is a 242-residue protein sequence, read N- to C-terminus: UPF0073 membrane protein Rv1085c (242 aa).

7 helical membrane-spanning segments follow: residues 42-62, 67-87, 108-128, 133-153, 159-179, 186-206, and 222-242; these read VYSAGTAVLAGASLVAVSWAV, AGLTTLAYTAATITMFTVSAT, SMIFVFIAGSYTPFALLALPA, VVLSIVWGGAIAGILLKMCWP, VGVPLYLLLGWVAVWYTATIL, ALVLLFVGGALYSIGGILYAV, and FHACTAVAAICHYIAMWFVVF.

The protein belongs to the UPF0073 (Hly-III) family.

Its subcellular location is the cell membrane. The chain is UPF0073 membrane protein Rv1085c from Mycobacterium tuberculosis (strain ATCC 25618 / H37Rv).